A 433-amino-acid polypeptide reads, in one-letter code: MGTFKIYPGKLKGEVKTPPSKSMAHRGVICAALGDGISKIRNINYSDDIIATINAMRSLGAIITKEDEYLHVIGIKSEKCKKNIELNRTIDCNESGSTLRFLVPISCIFEGSSRFIGRGNLGKRPLDTYYEIFDNQGIKHSYKKGKLDLRIEGILKCGEFKLRGDISSQFISGMLFTLPLLEGDSKVIITTDLESKGYIDLTLSAMSDFGIEIINNNYREFIIKGNQTYKSRNYRIEGDYSQAAFFLVADALKSEVFINDLNLESLQGDKEVIEILERMNMKIKNIDNGLLGIQRENLGSTIIDGSQCPDIIPVISLAASLCNGRTEIINVGRLRIKECDRLSAVASELNKLGAHIIEKEDSLIIDGVKTLKGGVKVWSHKDHRIAMMLAIASTVCMEPIILEDYECISKSYPAFFDDFKALGGNFHEWNLGE.

Residues K21, S22, and R26 each coordinate 3-phosphoshikimate. A phosphoenolpyruvate-binding site is contributed by K21. The phosphoenolpyruvate site is built by G96 and R124. 6 residues coordinate 3-phosphoshikimate: S167, S168, Q169, S195, D310, and K337. Q169 is a binding site for phosphoenolpyruvate. The active-site Proton acceptor is D310. The phosphoenolpyruvate site is built by R341, R384, and K410.

This sequence belongs to the EPSP synthase family. As to quaternary structure, monomer.

The protein localises to the cytoplasm. The enzyme catalyses 3-phosphoshikimate + phosphoenolpyruvate = 5-O-(1-carboxyvinyl)-3-phosphoshikimate + phosphate. It participates in metabolic intermediate biosynthesis; chorismate biosynthesis; chorismate from D-erythrose 4-phosphate and phosphoenolpyruvate: step 6/7. Its function is as follows. Catalyzes the transfer of the enolpyruvyl moiety of phosphoenolpyruvate (PEP) to the 5-hydroxyl of shikimate-3-phosphate (S3P) to produce enolpyruvyl shikimate-3-phosphate and inorganic phosphate. The sequence is that of 3-phosphoshikimate 1-carboxyvinyltransferase from Clostridium botulinum (strain Eklund 17B / Type B).